The following is a 411-amino-acid chain: ATP-dependent Clp protease ATP-binding subunit ClpX (411 aa).

The region spanning methionine 1 to valine 49 is the ClpX-type ZB domain. The Zn(2+) site is built by cysteine 8, cysteine 11, cysteine 30, and cysteine 33. Proline 115–leucine 122 serves as a coordination point for ATP.

This sequence belongs to the ClpX chaperone family. In terms of assembly, component of the ClpX-ClpP complex. Forms a hexameric ring that, in the presence of ATP, binds to fourteen ClpP subunits assembled into a disk-like structure with a central cavity, resembling the structure of eukaryotic proteasomes.

Functionally, ATP-dependent specificity component of the Clp protease. It directs the protease to specific substrates. Can perform chaperone functions in the absence of ClpP. The protein is ATP-dependent Clp protease ATP-binding subunit ClpX of Dictyoglomus thermophilum (strain ATCC 35947 / DSM 3960 / H-6-12).